The sequence spans 642 residues: Threonine--tRNA ligase (642 aa).

Residues 1–61 enclose the TGS domain; sequence MPVITLPDGS…ENDATLSIIT (61 aa). The tract at residues 243–534 is catalytic; it reads DHRKIGKQLD…LTEEFAGFFP (292 aa). Zn(2+)-binding residues include C334, H385, and H511.

The protein belongs to the class-II aminoacyl-tRNA synthetase family. In terms of assembly, homodimer. Zn(2+) serves as cofactor.

The protein resides in the cytoplasm. The enzyme catalyses tRNA(Thr) + L-threonine + ATP = L-threonyl-tRNA(Thr) + AMP + diphosphate + H(+). Functionally, catalyzes the attachment of threonine to tRNA(Thr) in a two-step reaction: L-threonine is first activated by ATP to form Thr-AMP and then transferred to the acceptor end of tRNA(Thr). Also edits incorrectly charged L-seryl-tRNA(Thr). The chain is Threonine--tRNA ligase from Salmonella heidelberg (strain SL476).